We begin with the raw amino-acid sequence, 190 residues long: Guanylate kinase (190 aa).

Positions 3-185 (NYIFIISAPS…SLEQLCKYFE (183 aa)) constitute a Guanylate kinase-like domain. 10 to 17 (APSGAGKS) provides a ligand contact to ATP.

It belongs to the guanylate kinase family.

The protein resides in the cytoplasm. The catalysed reaction is GMP + ATP = GDP + ADP. Essential for recycling GMP and indirectly, cGMP. This chain is Guanylate kinase, found in Francisella tularensis subsp. holarctica (strain OSU18).